The sequence spans 194 residues: FMN-dependent NADH:quinone oxidoreductase (194 aa).

FMN is bound by residues serine 9, 15–17 (SIS), and 85–88 (MYNF).

The protein belongs to the azoreductase type 1 family. Homodimer. FMN serves as cofactor.

The enzyme catalyses 2 a quinone + NADH + H(+) = 2 a 1,4-benzosemiquinone + NAD(+). It carries out the reaction N,N-dimethyl-1,4-phenylenediamine + anthranilate + 2 NAD(+) = 2-(4-dimethylaminophenyl)diazenylbenzoate + 2 NADH + 2 H(+). In terms of biological role, quinone reductase that provides resistance to thiol-specific stress caused by electrophilic quinones. Also exhibits azoreductase activity. Catalyzes the reductive cleavage of the azo bond in aromatic azo compounds to the corresponding amines. In Xanthomonas oryzae pv. oryzae (strain MAFF 311018), this protein is FMN-dependent NADH:quinone oxidoreductase.